The primary structure comprises 304 residues: uncharacterized protein (304 aa).

Residues 136–137 (GI), 215–217 (VGR), and aspartate 241 contribute to the NAD(+) site. Arginine 217 is an active-site residue. Residue glutamate 246 is part of the active site. The active-site Proton donor is the histidine 265. 265-268 (HTAN) lines the NAD(+) pocket.

The protein belongs to the D-isomer specific 2-hydroxyacid dehydrogenase family.

This is an uncharacterized protein from Corynebacterium melassecola.